A 136-amino-acid polypeptide reads, in one-letter code: Large-conductance mechanosensitive channel (136 aa).

A run of 2 helical transmembrane segments spans residues 9–29 and 79–99; these read AFASRGNVIDMAVGIIIGAAF and IQTVIDFTIIAFAIFMGLKAI.

It belongs to the MscL family. As to quaternary structure, homopentamer.

It localises to the cell inner membrane. In terms of biological role, channel that opens in response to stretch forces in the membrane lipid bilayer. May participate in the regulation of osmotic pressure changes within the cell. This Shewanella sp. (strain MR-4) protein is Large-conductance mechanosensitive channel.